The sequence spans 235 residues: Ubiquinone biosynthesis O-methyltransferase (235 aa).

Residues Arg39, Gly59, Asp80, and Met124 each coordinate S-adenosyl-L-methionine.

It belongs to the methyltransferase superfamily. UbiG/COQ3 family.

It catalyses the reaction a 3-demethylubiquinol + S-adenosyl-L-methionine = a ubiquinol + S-adenosyl-L-homocysteine + H(+). The enzyme catalyses a 3-(all-trans-polyprenyl)benzene-1,2-diol + S-adenosyl-L-methionine = a 2-methoxy-6-(all-trans-polyprenyl)phenol + S-adenosyl-L-homocysteine + H(+). It participates in cofactor biosynthesis; ubiquinone biosynthesis. In terms of biological role, O-methyltransferase that catalyzes the 2 O-methylation steps in the ubiquinone biosynthetic pathway. This is Ubiquinone biosynthesis O-methyltransferase from Photobacterium profundum (strain SS9).